The sequence spans 133 residues: Salmonella pathogenicity island 2 protein C (133 aa).

In terms of assembly, interacts with the mammalian NIPSNAP3A and HOOK3 proteins in infected cells.

It localises to the secreted. The protein resides in the cytoplasm. Virulence protein that plays a central role in mammalian macrophage infection, by inhibiting phagosome-lysosome fusion and cellular trafficking, including trafficking of organelles that are devoid of Salmonella. May act by disrupting the function of the mammalian HOOK3 protein, a protein involved in the cellular traffic. Also required for actin ADP-ribosylase SpvB activity. This Salmonella typhimurium (strain 14028s / SGSC 2262) protein is Salmonella pathogenicity island 2 protein C (spiC).